Reading from the N-terminus, the 602-residue chain is Isocitrate dehydrogenase kinase/phosphatase (602 aa).

ATP contacts are provided by residues 327 to 333 (APGIKGM) and K348. Residue D383 is part of the active site.

It belongs to the AceK family.

It is found in the cytoplasm. The enzyme catalyses L-seryl-[isocitrate dehydrogenase] + ATP = O-phospho-L-seryl-[isocitrate dehydrogenase] + ADP + H(+). In terms of biological role, bifunctional enzyme which can phosphorylate or dephosphorylate isocitrate dehydrogenase (IDH) on a specific serine residue. This is a regulatory mechanism which enables bacteria to bypass the Krebs cycle via the glyoxylate shunt in response to the source of carbon. When bacteria are grown on glucose, IDH is fully active and unphosphorylated, but when grown on acetate or ethanol, the activity of IDH declines drastically concomitant with its phosphorylation. The polypeptide is Isocitrate dehydrogenase kinase/phosphatase (Paraburkholderia phymatum (strain DSM 17167 / CIP 108236 / LMG 21445 / STM815) (Burkholderia phymatum)).